The following is a 505-amino-acid chain: Probable ribonuclease FAU-1 (505 aa).

The segment at 389-408 is disordered; that stretch reads ISGHGSGTYDELGTPRESGD.

Belongs to the FAU-1 family.

Probable RNase involved in rRNA stability through maturation and/or degradation of precursor rRNAs. Binds to RNA in loop regions with AU-rich sequences. This chain is Probable ribonuclease FAU-1, found in Haloquadratum walsbyi (strain DSM 16790 / HBSQ001).